Reading from the N-terminus, the 297-residue chain is Ribonuclease H2 subunit A (297 aa).

The RNase H type-2 domain occupies Pro21–Val248. The a divalent metal cation site is built by Asp27, Glu28, and Asp138.

The protein belongs to the RNase HII family. Eukaryotic subfamily. Mn(2+) serves as cofactor. It depends on Mg(2+) as a cofactor.

The enzyme catalyses Endonucleolytic cleavage to 5'-phosphomonoester.. Functionally, catalytic subunit of RNase HII, an endonuclease that specifically degrades the RNA of RNA:DNA hybrids. Participates in DNA replication, possibly by mediating the removal of lagging-strand Okazaki fragment RNA primers during DNA replication. Mediates the excision of single ribonucleotides from DNA:RNA duplexes. The protein is Ribonuclease H2 subunit A (rnh-2) of Caenorhabditis elegans.